Consider the following 142-residue polypeptide: Ribosome-binding factor A (142 aa).

The disordered stretch occupies residues 118-142; sequence DEAKQQEHGTVENAKQDGDKAEDDK.

It belongs to the RbfA family. In terms of assembly, monomer. Binds 30S ribosomal subunits, but not 50S ribosomal subunits or 70S ribosomes.

It is found in the cytoplasm. In terms of biological role, one of several proteins that assist in the late maturation steps of the functional core of the 30S ribosomal subunit. Associates with free 30S ribosomal subunits (but not with 30S subunits that are part of 70S ribosomes or polysomes). Required for efficient processing of 16S rRNA. May interact with the 5'-terminal helix region of 16S rRNA. The chain is Ribosome-binding factor A from Shewanella piezotolerans (strain WP3 / JCM 13877).